The sequence spans 71 residues: Large ribosomal subunit protein eL38 (71 aa).

It belongs to the eukaryotic ribosomal protein eL38 family.

In Ixodes scapularis (Black-legged tick), this protein is Large ribosomal subunit protein eL38 (RpL38).